Reading from the N-terminus, the 283-residue chain is Pantoate--beta-alanine ligase (283 aa).

The protein belongs to the pantothenate synthetase family.

The catalysed reaction is (R)-pantoate + beta-alanine + ATP = (R)-pantothenate + AMP + diphosphate + H(+). It participates in cofactor biosynthesis; (R)-pantothenate biosynthesis; (R)-pantothenate from (R)-pantoate and beta-alanine: step 1/1. The protein is Pantoate--beta-alanine ligase (pan6) of Schizosaccharomyces pombe (strain 972 / ATCC 24843) (Fission yeast).